Consider the following 199-residue polypeptide: MIKVGLTGGICSGKSTISSMIKEAGIPVIDADIIAREVLEKYPDILLRVRATFGGHFFDWRGDFRRREFGNHIFRFPKERIKYEEIIMPYIKEEIEIKLKEYEKINTKLVVVDGATLIENDMHKDMDMVVLVWVDKSSQIERMGFRDKLSKGEAINRINSQLSLERKKDYANIIIDNSGNLIKTKEQIDDLLEFFTLYQ.

Residues 3 to 199 (KVGLTGGICS…DLLEFFTLYQ (197 aa)) enclose the DPCK domain. 11-16 (CSGKST) is an ATP binding site.

The protein belongs to the CoaE family.

It is found in the cytoplasm. It catalyses the reaction 3'-dephospho-CoA + ATP = ADP + CoA + H(+). The protein operates within cofactor biosynthesis; coenzyme A biosynthesis; CoA from (R)-pantothenate: step 5/5. Functionally, catalyzes the phosphorylation of the 3'-hydroxyl group of dephosphocoenzyme A to form coenzyme A. In Clostridium perfringens (strain 13 / Type A), this protein is Dephospho-CoA kinase.